The following is a 117-amino-acid chain: Large ribosomal subunit protein uL22 (117 aa).

The protein belongs to the universal ribosomal protein uL22 family. In terms of assembly, part of the 50S ribosomal subunit.

Its function is as follows. This protein binds specifically to 23S rRNA; its binding is stimulated by other ribosomal proteins, e.g. L4, L17, and L20. It is important during the early stages of 50S assembly. It makes multiple contacts with different domains of the 23S rRNA in the assembled 50S subunit and ribosome. In terms of biological role, the globular domain of the protein is located near the polypeptide exit tunnel on the outside of the subunit, while an extended beta-hairpin is found that lines the wall of the exit tunnel in the center of the 70S ribosome. The sequence is that of Large ribosomal subunit protein uL22 from Lacticaseibacillus casei (strain BL23) (Lactobacillus casei).